Reading from the N-terminus, the 428-residue chain is D-amino acid dehydrogenase (428 aa).

Position 3-17 (3-17 (VVILGSGVVGVASAY)) interacts with FAD.

Belongs to the DadA oxidoreductase family. Requires FAD as cofactor.

It catalyses the reaction a D-alpha-amino acid + A + H2O = a 2-oxocarboxylate + AH2 + NH4(+). Its pathway is amino-acid degradation; D-alanine degradation; NH(3) and pyruvate from D-alanine: step 1/1. In terms of biological role, oxidative deamination of D-amino acids. The chain is D-amino acid dehydrogenase from Burkholderia mallei (strain NCTC 10247).